A 759-amino-acid polypeptide reads, in one-letter code: Phosphoribosylformylglycinamidine synthase subunit PurL (759 aa).

Residue His-34 is part of the active site. An ATP-binding site is contributed by Tyr-37. Glu-95 is a Mg(2+) binding site. Residues 96-99 and Arg-118 each bind substrate; that span reads SHNH. His-97 serves as the catalytic Proton acceptor. Asp-119 contacts Mg(2+). Residue Gln-243 participates in substrate binding. Asp-271 is a binding site for Mg(2+). 315-317 provides a ligand contact to substrate; it reads ESQ. The interval 388–422 is disordered; the sequence is DGAPMNDLASESPTQPDRDLPDPEPSLDEAVESVV. ATP is bound by residues Asp-520 and Gly-557. Residue Asn-558 participates in Mg(2+) binding. Position 560 (Ser-560) interacts with substrate.

It belongs to the FGAMS family. As to quaternary structure, monomer. Part of the FGAM synthase complex composed of 1 PurL, 1 PurQ and 2 PurS subunits.

The protein localises to the cytoplasm. It carries out the reaction N(2)-formyl-N(1)-(5-phospho-beta-D-ribosyl)glycinamide + L-glutamine + ATP + H2O = 2-formamido-N(1)-(5-O-phospho-beta-D-ribosyl)acetamidine + L-glutamate + ADP + phosphate + H(+). It participates in purine metabolism; IMP biosynthesis via de novo pathway; 5-amino-1-(5-phospho-D-ribosyl)imidazole from N(2)-formyl-N(1)-(5-phospho-D-ribosyl)glycinamide: step 1/2. In terms of biological role, part of the phosphoribosylformylglycinamidine synthase complex involved in the purines biosynthetic pathway. Catalyzes the ATP-dependent conversion of formylglycinamide ribonucleotide (FGAR) and glutamine to yield formylglycinamidine ribonucleotide (FGAM) and glutamate. The FGAM synthase complex is composed of three subunits. PurQ produces an ammonia molecule by converting glutamine to glutamate. PurL transfers the ammonia molecule to FGAR to form FGAM in an ATP-dependent manner. PurS interacts with PurQ and PurL and is thought to assist in the transfer of the ammonia molecule from PurQ to PurL. The chain is Phosphoribosylformylglycinamidine synthase subunit PurL from Halorubrum lacusprofundi (strain ATCC 49239 / DSM 5036 / JCM 8891 / ACAM 34).